Consider the following 107-residue polypeptide: Cell division protein FtsB (107 aa).

Residues Met1–Lys3 lie on the Cytoplasmic side of the membrane. A helical transmembrane segment spans residues Leu4 to Leu21. Residues Gly22–Gln107 are Periplasmic-facing. A coiled-coil region spans residues Gln39–Gly62.

The protein belongs to the FtsB family. As to quaternary structure, part of a complex composed of FtsB, FtsL and FtsQ.

Its subcellular location is the cell inner membrane. Functionally, essential cell division protein. May link together the upstream cell division proteins, which are predominantly cytoplasmic, with the downstream cell division proteins, which are predominantly periplasmic. The protein is Cell division protein FtsB of Yersinia enterocolitica serotype O:8 / biotype 1B (strain NCTC 13174 / 8081).